Here is a 305-residue protein sequence, read N- to C-terminus: Tetraspanin-12 (305 aa).

At 1 to 12 the chain is on the cytoplasmic side; the sequence is MAREDSVRCLRC. Residues cysteine 9 and cysteine 12 are each lipidated (S-palmitoyl cysteine). The helical transmembrane segment at 13–33 threads the bilayer; it reads LLYALNLLFWLMSISVLGVSA. The Extracellular portion of the chain corresponds to 34-59; it reads WIRDYLNNVLTLTAETRVEEAVILTY. The chain crosses the membrane as a helical span at residues 60–80; that stretch reads FPVVHPVMIAVCCFLILVGML. The Cytoplasmic segment spans residues 81–89; it reads GYCGTVKRN. Cysteine 83 carries the S-palmitoyl cysteine lipid modification. A helical transmembrane segment spans residues 90–110; that stretch reads LLLLVWYFGSLLVIFCVELAC. The Extracellular segment spans residues 111–224; the sequence is GVWTYEQEIT…RGTKQLQVLR (114 aa). The helical transmembrane segment at 225–245 threads the bilayer; the sequence is FLGISIGVTQILAMILTITLL. Topologically, residues 246–305 are cytoplasmic; that stretch reads WALYYDRRDPGADQIMSLKNDTSQQLSCHSVELLKPSLTGIFEHTSMANSFNTHFEMEEL.

This sequence belongs to the tetraspanin (TM4SF) family. In terms of assembly, component of a complex, at least composed of TSPAN12, FZD4 and norrin (NDP). Post-translationally, palmitoylated; required for interaction with ADAM10. The precise position of palmitoylated residues is unclear and occurs either on Cys-9, Cys-12 and/or Cys-83.

The protein resides in the cell membrane. Its function is as follows. Regulator of cell surface receptor signal transduction. Plays a central role in retinal vascularization by regulating norrin (NDP) signal transduction. Acts in concert with norrin (NDP) to promote FZD4 multimerization and subsequent activation of FZD4, leading to promote accumulation of beta-catenin (CTNNB1) and stimulate LEF/TCF-mediated transcriptional programs. Suprisingly, it only activates the norrin (NDP)-dependent activation of FZD4, while it does not activate the Wnt-dependent activation of FZD4, suggesting the existence of a Wnt-independent signaling that also promote accumulation the beta-catenin (CTNNB1). This Gallus gallus (Chicken) protein is Tetraspanin-12 (TSPAN12).